The following is a 674-amino-acid chain: Early transcription factor 70 kDa subunit (674 aa).

Positions 34 to 193 (ERSLKEKKSV…KDIVELLTNE (160 aa)) constitute a Helicase ATP-binding domain. Residue 45–52 (LFHKMGSG) participates in ATP binding. Positions 135–138 (YDNY) match the DEXH box motif.

Belongs to the helicase family. VETF subfamily. In terms of assembly, heterodimer of a 70 kDa and a 82 kDa subunit. Part of the early transcription complex composed of ETF, RAP94, and the DNA-directed RNA polymerase.

The protein resides in the virion. Its function is as follows. Acts with RNA polymerase to initiate transcription from early gene promoters. Is recruited by the RPO-associated protein of 94 kDa (RAP94) to form the early transcription complex, which also contains the core RNA polymerase. ETF heterodimer binds to early gene promoters. This Melanoplus sanguinipes entomopoxvirus (MsEPV) protein is Early transcription factor 70 kDa subunit (VETFS).